The primary structure comprises 119 residues: Small ribosomal subunit protein bS16 (119 aa).

Belongs to the bacterial ribosomal protein bS16 family.

The polypeptide is Small ribosomal subunit protein bS16 (Amoebophilus asiaticus (strain 5a2)).